The chain runs to 368 residues: Homoserine O-acetyltransferase (368 aa).

The region spanning 41–352 (NVILITHALS…DYGHDSFLVE (312 aa)) is the AB hydrolase-1 domain. Ser-147 acts as the Nucleophile in catalysis. Position 219 (Arg-219) interacts with substrate. Residues Asp-313 and His-346 contribute to the active site. Asp-347 lines the substrate pocket.

The protein belongs to the AB hydrolase superfamily. MetX family. As to quaternary structure, homodimer.

The protein localises to the cytoplasm. The enzyme catalyses L-homoserine + acetyl-CoA = O-acetyl-L-homoserine + CoA. The protein operates within amino-acid biosynthesis; L-methionine biosynthesis via de novo pathway; O-acetyl-L-homoserine from L-homoserine: step 1/1. Its function is as follows. Transfers an acetyl group from acetyl-CoA to L-homoserine, forming acetyl-L-homoserine. This Nautilia profundicola (strain ATCC BAA-1463 / DSM 18972 / AmH) protein is Homoserine O-acetyltransferase.